The primary structure comprises 199 residues: NAD(P)H dehydrogenase (quinone) (199 aa).

Residues 4 to 190 form the Flavodoxin-like domain; that stretch reads VLVLYYSAYG…AGARYQGRQI (187 aa). Residues 10–15 and 78–80 contribute to the FMN site; these read SAYGHI and TRF. Tyr12 is a binding site for NAD(+). Residue Trp98 coordinates substrate. FMN is bound by residues 113 to 119 and His134; that span reads SSATQHG.

Belongs to the WrbA family. Requires FMN as cofactor.

The catalysed reaction is a quinone + NADH + H(+) = a quinol + NAD(+). The enzyme catalyses a quinone + NADPH + H(+) = a quinol + NADP(+). This chain is NAD(P)H dehydrogenase (quinone), found in Bradyrhizobium diazoefficiens (strain JCM 10833 / BCRC 13528 / IAM 13628 / NBRC 14792 / USDA 110).